The chain runs to 268 residues: uncharacterized protein (268 aa).

The protein belongs to the glycosyltransferase 2 family.

This is an uncharacterized protein from Bacillus subtilis (strain 168).